Reading from the N-terminus, the 80-residue chain is Dermaseptin-A5 (80 aa).

The N-terminal stretch at 1-22 (MAFLKKSLFLVLFLGLVSLSIC) is a signal peptide. A propeptide spanning residues 23-43 (EEEKRENEDEEEQEDDEQSEM) is cleaved from the precursor. Residues 24-45 (EEKRENEDEEEQEDDEQSEMKR) are disordered. Residues 30-40 (EDEEEQEDDEQ) are compositionally biased toward acidic residues. Valine amide is present on valine 77. A propeptide spanning residues 79–80 (EQ) is cleaved from the precursor.

The protein belongs to the frog skin active peptide (FSAP) family. Dermaseptin subfamily. In terms of tissue distribution, expressed by the skin glands.

The protein resides in the secreted. In terms of biological role, possesses a potent antimicrobial activity against Gram-positive and Gram-negative bacteria. Probably acts by disturbing membrane functions with its amphipathic structure. The polypeptide is Dermaseptin-A5 (Agalychnis annae (Blue-sided leaf frog)).